We begin with the raw amino-acid sequence, 407 residues long: Mitochondrial protein import protein mas5 (407 aa).

A J domain is found at 6–68; it reads KLYEVLNVDV…EKRATYDRFG (63 aa). Substrate is bound by residues L110 and 129–131; that span reads LAL. The CR-type zinc-finger motif lies at 124–207; it reads GKTTKLALQK…CDGAKVISQR (84 aa). Positions 137, 140, 153, 156, 179, 182, 195, and 198 each coordinate Zn(2+). CXXCXGXG motif repeat units follow at residues 137-144, 153-160, 179-186, and 195-202; these read CPKCSGRG, CASCNGSG, CPDCNGAG, and CKECDGAK. Substrate contacts are provided by residues 209–210 and 241–243; these read IL and VIF. The disordered stretch occupies residues 375–407; the sequence is VRIDNNVDPTTATSMDEDEDEEGGHPGVQCAQQ. At C404 the chain carries Cysteine methyl ester. C404 carries S-farnesyl cysteine lipidation. The propeptide at 405–407 is removed in mature form; the sequence is AQQ.

As to quaternary structure, homodimer.

It is found in the cytoplasm. It localises to the nucleus. Its function is as follows. Probably involved in mitochondrial protein import. Plays a role in microtubule cytoskeleton organization. The protein is Mitochondrial protein import protein mas5 (mas5) of Schizosaccharomyces pombe (strain 972 / ATCC 24843) (Fission yeast).